Here is a 369-residue protein sequence, read N- to C-terminus: Anhydro-N-acetylmuramic acid kinase (369 aa).

12-19 (GTSLDGVD) contributes to the ATP binding site.

This sequence belongs to the anhydro-N-acetylmuramic acid kinase family.

The enzyme catalyses 1,6-anhydro-N-acetyl-beta-muramate + ATP + H2O = N-acetyl-D-muramate 6-phosphate + ADP + H(+). It functions in the pathway amino-sugar metabolism; 1,6-anhydro-N-acetylmuramate degradation. Its pathway is cell wall biogenesis; peptidoglycan recycling. Its function is as follows. Catalyzes the specific phosphorylation of 1,6-anhydro-N-acetylmuramic acid (anhMurNAc) with the simultaneous cleavage of the 1,6-anhydro ring, generating MurNAc-6-P. Is required for the utilization of anhMurNAc either imported from the medium or derived from its own cell wall murein, and thus plays a role in cell wall recycling. The chain is Anhydro-N-acetylmuramic acid kinase from Shigella flexneri.